We begin with the raw amino-acid sequence, 142 residues long: Large ribosomal subunit protein bL17 (142 aa).

It belongs to the bacterial ribosomal protein bL17 family. Part of the 50S ribosomal subunit. Contacts protein L32.

The protein is Large ribosomal subunit protein bL17 of Protochlamydia amoebophila (strain UWE25).